A 160-amino-acid chain; its full sequence is Cytochrome b6-f complex subunit 4 (160 aa).

Transmembrane regions (helical) follow at residues 36-56, 95-115, and 131-151; these read LLYIFPVVIFGTFACCIGLAV, LLGVLAMAAVPVGLLTVPFIE, and ILFLVGTLVAVWLGIGATFPI.

This sequence belongs to the cytochrome b family. PetD subfamily. The 4 large subunits of the cytochrome b6-f complex are cytochrome b6, subunit IV (17 kDa polypeptide, petD), cytochrome f and the Rieske protein, while the 4 small subunits are petG, petL, petM and petN. The complex functions as a dimer.

Its subcellular location is the plastid. It is found in the chloroplast thylakoid membrane. Its function is as follows. Component of the cytochrome b6-f complex, which mediates electron transfer between photosystem II (PSII) and photosystem I (PSI), cyclic electron flow around PSI, and state transitions. This is Cytochrome b6-f complex subunit 4 from Chlamydomonas moewusii (Chlamydomonas eugametos).